A 494-amino-acid chain; its full sequence is 3-octaprenyl-4-hydroxybenzoate carboxy-lyase (494 aa).

N172 is a binding site for Mn(2+). Residues 175-177, 189-191, and 194-195 contribute to the prenylated FMN site; these read IYR, RWL, and RG. Residue E238 participates in Mn(2+) binding. Catalysis depends on D287, which acts as the Proton donor.

Belongs to the UbiD family. In terms of assembly, homohexamer. Requires prenylated FMN as cofactor. Mn(2+) serves as cofactor.

The protein localises to the cell membrane. The enzyme catalyses a 4-hydroxy-3-(all-trans-polyprenyl)benzoate + H(+) = a 2-(all-trans-polyprenyl)phenol + CO2. The protein operates within cofactor biosynthesis; ubiquinone biosynthesis. Functionally, catalyzes the decarboxylation of 3-octaprenyl-4-hydroxy benzoate to 2-octaprenylphenol, an intermediate step in ubiquinone biosynthesis. This chain is 3-octaprenyl-4-hydroxybenzoate carboxy-lyase, found in Erwinia tasmaniensis (strain DSM 17950 / CFBP 7177 / CIP 109463 / NCPPB 4357 / Et1/99).